The chain runs to 188 residues: dCTP deaminase (188 aa).

DCTP is bound by residues 111 to 116 (KSTYAR), 135 to 137 (VLE), Gln156, Tyr170, and Gln180. Glu137 acts as the Proton donor/acceptor in catalysis.

Belongs to the dCTP deaminase family. In terms of assembly, homotrimer.

It catalyses the reaction dCTP + H2O + H(+) = dUTP + NH4(+). It participates in pyrimidine metabolism; dUMP biosynthesis; dUMP from dCTP (dUTP route): step 1/2. Functionally, catalyzes the deamination of dCTP to dUTP. This Protochlamydia amoebophila (strain UWE25) protein is dCTP deaminase.